Consider the following 558-residue polypeptide: Zinc finger protein piragua (558 aa).

One can recognise a ZAD domain in the interval 15 to 94; that stretch reads STCRLCHHNT…QEREQSLQEQ (80 aa). The Zn(2+) site is built by cysteine 17, cysteine 20, cysteine 67, and cysteine 70. Acidic residues predominate over residues 132 to 177; that stretch reads LAESSEEEFALGSDGEYENYDDDDEEEEEDYDEEDEEDGQNGEDVD. The tract at residues 132–178 is disordered; that stretch reads LAESSEEEFALGSDGEYENYDDDDEEEEEDYDEEDEEDGQNGEDVDM. C2H2-type zinc fingers lie at residues 208–231, 237–260, 266–288, 294–316, 322–344, 350–372, 414–436, 441–464, and 468–490; these read FLCQ…LAAH, YCCN…KTLH, YVCA…TIVH, FTCN…MRIH, FVCQ…TRSH, FQCG…QQVH, YHCD…QALH, FACK…LEAH, and FTCG…LKVH.

In terms of biological role, may be involved in transcriptional regulation. The function of this protein is unclear. According to one report, it is required for development and viability since mutants display defects in several developmental morphogenetic processes including dorsal closure and head involution, and die by the first instar larval stage. It may also be involved in fwe-mediated cellular competition. However, according to another report, it is not required for development or viability since mutants have no visible phenotype and are fertile. This is Zinc finger protein piragua from Drosophila melanogaster (Fruit fly).